The chain runs to 361 residues: 3-isopropylmalate dehydrogenase (361 aa).

G78–E91 contacts NAD(+). Substrate is bound by residues R98, R108, R136, and D226. Mg(2+)-binding residues include D226, D250, and D254. NAD(+) is bound at residue G284 to N296.

Belongs to the isocitrate and isopropylmalate dehydrogenases family. LeuB type 1 subfamily. Homodimer. It depends on Mg(2+) as a cofactor. Requires Mn(2+) as cofactor.

It is found in the cytoplasm. The catalysed reaction is (2R,3S)-3-isopropylmalate + NAD(+) = 4-methyl-2-oxopentanoate + CO2 + NADH. The protein operates within amino-acid biosynthesis; L-leucine biosynthesis; L-leucine from 3-methyl-2-oxobutanoate: step 3/4. Functionally, catalyzes the oxidation of 3-carboxy-2-hydroxy-4-methylpentanoate (3-isopropylmalate) to 3-carboxy-4-methyl-2-oxopentanoate. The product decarboxylates to 4-methyl-2 oxopentanoate. The chain is 3-isopropylmalate dehydrogenase from Thermosynechococcus vestitus (strain NIES-2133 / IAM M-273 / BP-1).